Here is a 112-residue protein sequence, read N- to C-terminus: Large ribosomal subunit protein uL22 (112 aa).

The protein belongs to the universal ribosomal protein uL22 family. Part of the 50S ribosomal subunit.

This protein binds specifically to 23S rRNA; its binding is stimulated by other ribosomal proteins, e.g. L4, L17, and L20. It is important during the early stages of 50S assembly. It makes multiple contacts with different domains of the 23S rRNA in the assembled 50S subunit and ribosome. Its function is as follows. The globular domain of the protein is located near the polypeptide exit tunnel on the outside of the subunit, while an extended beta-hairpin is found that lines the wall of the exit tunnel in the center of the 70S ribosome. The polypeptide is Large ribosomal subunit protein uL22 (Finegoldia magna (strain ATCC 29328 / DSM 20472 / WAL 2508) (Peptostreptococcus magnus)).